Here is a 355-residue protein sequence, read N- to C-terminus: NADH dehydrogenase-like protein YutJ (355 aa).

This sequence belongs to the NADH dehydrogenase family. Requires FAD as cofactor.

This Bacillus subtilis (strain 168) protein is NADH dehydrogenase-like protein YutJ (yutJ).